The primary structure comprises 187 residues: Large ribosomal subunit protein bL21 (187 aa).

Residues 157–187 (KVAKKAVKKTVKKATKTGAKKKAAKKTSKKA) are disordered.

Belongs to the bacterial ribosomal protein bL21 family. In terms of assembly, part of the 50S ribosomal subunit. Contacts protein L20.

In terms of biological role, this protein binds to 23S rRNA in the presence of protein L20. This chain is Large ribosomal subunit protein bL21, found in Bdellovibrio bacteriovorus (strain ATCC 15356 / DSM 50701 / NCIMB 9529 / HD100).